A 379-amino-acid chain; its full sequence is Queuine tRNA-ribosyltransferase (379 aa).

Residue Asp-95 is the Proton acceptor of the active site. Residues Asp-95–Phe-99, Asp-149, Gln-197, and Gly-224 each bind substrate. Residues Gly-255 to Glu-261 form an RNA binding region. Asp-274 acts as the Nucleophile in catalysis. 4 residues coordinate Zn(2+): Cys-312, Cys-314, Cys-317, and His-343.

This sequence belongs to the queuine tRNA-ribosyltransferase family. In terms of assembly, homodimer. Within each dimer, one monomer is responsible for RNA recognition and catalysis, while the other monomer binds to the replacement base PreQ1. The cofactor is Zn(2+).

The enzyme catalyses 7-aminomethyl-7-carbaguanine + guanosine(34) in tRNA = 7-aminomethyl-7-carbaguanosine(34) in tRNA + guanine. It participates in tRNA modification; tRNA-queuosine biosynthesis. Catalyzes the base-exchange of a guanine (G) residue with the queuine precursor 7-aminomethyl-7-deazaguanine (PreQ1) at position 34 (anticodon wobble position) in tRNAs with GU(N) anticodons (tRNA-Asp, -Asn, -His and -Tyr). Catalysis occurs through a double-displacement mechanism. The nucleophile active site attacks the C1' of nucleotide 34 to detach the guanine base from the RNA, forming a covalent enzyme-RNA intermediate. The proton acceptor active site deprotonates the incoming PreQ1, allowing a nucleophilic attack on the C1' of the ribose to form the product. After dissociation, two additional enzymatic reactions on the tRNA convert PreQ1 to queuine (Q), resulting in the hypermodified nucleoside queuosine (7-(((4,5-cis-dihydroxy-2-cyclopenten-1-yl)amino)methyl)-7-deazaguanosine). The polypeptide is Queuine tRNA-ribosyltransferase (Solibacter usitatus (strain Ellin6076)).